A 216-amino-acid chain; its full sequence is 3-isopropylmalate dehydratase small subunit 1 (216 aa).

Belongs to the LeuD family. LeuD type 1 subfamily. As to quaternary structure, heterodimer of LeuC and LeuD.

It carries out the reaction (2R,3S)-3-isopropylmalate = (2S)-2-isopropylmalate. It participates in amino-acid biosynthesis; L-leucine biosynthesis; L-leucine from 3-methyl-2-oxobutanoate: step 2/4. Catalyzes the isomerization between 2-isopropylmalate and 3-isopropylmalate, via the formation of 2-isopropylmaleate. This Bordetella bronchiseptica (strain ATCC BAA-588 / NCTC 13252 / RB50) (Alcaligenes bronchisepticus) protein is 3-isopropylmalate dehydratase small subunit 1.